A 240-amino-acid chain; its full sequence is Ubiquinone biosynthesis O-methyltransferase (240 aa).

R44, G64, D85, and M129 together coordinate S-adenosyl-L-methionine.

Belongs to the methyltransferase superfamily. UbiG/COQ3 family.

It catalyses the reaction a 3-demethylubiquinol + S-adenosyl-L-methionine = a ubiquinol + S-adenosyl-L-homocysteine + H(+). It carries out the reaction a 3-(all-trans-polyprenyl)benzene-1,2-diol + S-adenosyl-L-methionine = a 2-methoxy-6-(all-trans-polyprenyl)phenol + S-adenosyl-L-homocysteine + H(+). The protein operates within cofactor biosynthesis; ubiquinone biosynthesis. Functionally, O-methyltransferase that catalyzes the 2 O-methylation steps in the ubiquinone biosynthetic pathway. The polypeptide is Ubiquinone biosynthesis O-methyltransferase (Escherichia coli O8 (strain IAI1)).